Here is a 388-residue protein sequence, read N- to C-terminus: Succinate--CoA ligase [ADP-forming] subunit beta (388 aa).

One can recognise an ATP-grasp domain in the interval 9-244 (KQLFAEYGLP…PSQDDPREAH (236 aa)). Residues Lys-46, 53–55 (GRG), Glu-99, Thr-102, and Glu-107 contribute to the ATP site. Mg(2+) contacts are provided by Asn-199 and Asp-213. Substrate-binding positions include Asn-264 and 321-323 (GIV).

Belongs to the succinate/malate CoA ligase beta subunit family. Heterotetramer of two alpha and two beta subunits. The cofactor is Mg(2+).

It catalyses the reaction succinate + ATP + CoA = succinyl-CoA + ADP + phosphate. It carries out the reaction GTP + succinate + CoA = succinyl-CoA + GDP + phosphate. It functions in the pathway carbohydrate metabolism; tricarboxylic acid cycle; succinate from succinyl-CoA (ligase route): step 1/1. Its function is as follows. Succinyl-CoA synthetase functions in the citric acid cycle (TCA), coupling the hydrolysis of succinyl-CoA to the synthesis of either ATP or GTP and thus represents the only step of substrate-level phosphorylation in the TCA. The beta subunit provides nucleotide specificity of the enzyme and binds the substrate succinate, while the binding sites for coenzyme A and phosphate are found in the alpha subunit. The sequence is that of Succinate--CoA ligase [ADP-forming] subunit beta from Ectopseudomonas mendocina (strain ymp) (Pseudomonas mendocina).